Consider the following 509-residue polypeptide: Bifunctional purine biosynthesis protein PurH (509 aa).

The region spanning Met1–Val146 is the MGS-like domain.

This sequence belongs to the PurH family.

It carries out the reaction (6R)-10-formyltetrahydrofolate + 5-amino-1-(5-phospho-beta-D-ribosyl)imidazole-4-carboxamide = 5-formamido-1-(5-phospho-D-ribosyl)imidazole-4-carboxamide + (6S)-5,6,7,8-tetrahydrofolate. The enzyme catalyses IMP + H2O = 5-formamido-1-(5-phospho-D-ribosyl)imidazole-4-carboxamide. It functions in the pathway purine metabolism; IMP biosynthesis via de novo pathway; 5-formamido-1-(5-phospho-D-ribosyl)imidazole-4-carboxamide from 5-amino-1-(5-phospho-D-ribosyl)imidazole-4-carboxamide (10-formyl THF route): step 1/1. It participates in purine metabolism; IMP biosynthesis via de novo pathway; IMP from 5-formamido-1-(5-phospho-D-ribosyl)imidazole-4-carboxamide: step 1/1. The polypeptide is Bifunctional purine biosynthesis protein PurH (Natranaerobius thermophilus (strain ATCC BAA-1301 / DSM 18059 / JW/NM-WN-LF)).